Reading from the N-terminus, the 239-residue chain is Leucine rich adaptor protein 1 (239 aa).

2 LRR repeats span residues Leu-55 to Leu-83 and Leu-93 to Leu-114. The span at Ser-105–Gly-116 shows a compositional bias: low complexity. A disordered region spans residues Ser-105–Arg-138. 3 positions are modified to phosphoserine: Ser-118, Ser-126, and Ser-129.

Forms a tripartite complex with CDC42BPA/CDC42BPB and MYO18A acting as an adapter connecting both. Its binding to CDC42BPA/CDC42BPB results in their activation by abolition of their negative autoregulation. Interacts with CDC42BPA and CDC42BPB. Phosphorylated.

The protein resides in the cytoplasm. In terms of biological role, acts as an activator of the canonical NF-kappa-B pathway and drive the production of pro-inflammatory cytokines. Promotes the antigen (Ag)-presenting and priming function of dendritic cells via the canonical NF-kappa-B pathway. In concert with MYO18A and CDC42BPA/CDC42BPB, is involved in modulating lamellar actomyosin retrograde flow that is crucial to cell protrusion and migration. Activates CDC42BPA/CDC42BPB and targets it to actomyosin through its interaction with MYO18A, leading to MYL9/MLC2 phosphorylation and MYH9/MYH10-dependent actomyosin assembly in the lamella. The polypeptide is Leucine rich adaptor protein 1 (Lurap1) (Mus musculus (Mouse)).